Reading from the N-terminus, the 1076-residue chain is Structural maintenance of chromosomes protein 5 (1076 aa).

An ATP-binding site is contributed by 49–56; that stretch reads GHNGSGKS. The stretch at 190–415 forms a coiled coil; the sequence is STSIEDKCTT…KRDEEQNSQL (226 aa). Positions 375–410 are enriched in basic and acidic residues; that stretch reads EQKYSTAERDSRQEEDAIQKKSYEMRQLENKKRDEE. The disordered stretch occupies residues 375 to 420; the sequence is EQKYSTAERDSRQEEDAIQKKSYEMRQLENKKRDEEQNSQLNRQDR. The tract at residues 416-617 is flexible hinge; sequence NRQDRYRVLQ…ANTWRDQFFK (202 aa). Coiled coils occupy residues 627-713 and 749-786; these read NSIL…EKKA and KSRVNKSNSEAETHRSKLEDLKSVKDAAEDLLKTALNH.

The protein belongs to the SMC family. SMC5 subfamily. As to quaternary structure, interacts with smc-6. As to expression, expressed in the germline (at protein level).

The protein resides in the nucleus. It is found in the chromosome. Its function is as follows. Core component of the smc-5/smc-6 complex. Functions in DNA double strand break repair by promoting sister-chromatid homologous recombination during meiosis. Acts in a DNA repair pathway for removal of ionizing radiation- and ultraviolet (UV) radiation-induced DNA lesions that is distinct from classical nucleotide excision repair and the translesion synthesis pathway. Also involved in the recovery of stalled replication forks. The protein is Structural maintenance of chromosomes protein 5 of Caenorhabditis elegans.